A 347-amino-acid chain; its full sequence is Cell shape-determining protein MreB (347 aa).

ATP is bound by residues threonine 19–asparagine 21, glycine 165–threonine 167, glutamate 213–lysine 216, and glycine 295–leucine 298.

The protein belongs to the FtsA/MreB family. In terms of assembly, forms polymers in the presence of ATP. Forms pairs of protofilaments that adopt an antiparallel arrangement and bind to lipids.

It localises to the cytoplasm. Forms membrane-associated dynamic filaments that are essential for cell shape determination. Acts by regulating cell wall synthesis and cell elongation, and thus cell shape. A feedback loop between cell geometry and MreB localization may maintain elongated cell shape by targeting cell wall growth to regions of negative cell wall curvature. Required for mid-cell peptidoglycan synthesis and cell division. Directs the localization of the cytosolic peptidoglycan precursor-synthesizing enzyme MurG. Also required for proper chromosome segregation. Directs the segregation of origin-proximal but not origin-distal loci. In Caulobacter vibrioides (strain NA1000 / CB15N) (Caulobacter crescentus), this protein is Cell shape-determining protein MreB.